Reading from the N-terminus, the 216-residue chain is Ras-related protein RABA1b (216 aa).

GTP is bound at residue 20-27 (GDSGVGKS). An Effector region motif is present at residues 42-50 (SKSTIGVEF). GTP-binding positions include 68-72 (DTAGQ), 126-129 (NKSD), and 156-157 (SA). S-geranylgeranyl cysteine attachment occurs at residues Cys-213 and Cys-214.

It belongs to the small GTPase superfamily. Rab family.

Its subcellular location is the cell membrane. In terms of biological role, intracellular vesicle trafficking and protein transport. The sequence is that of Ras-related protein RABA1b (RABA1B) from Arabidopsis thaliana (Mouse-ear cress).